Reading from the N-terminus, the 140-residue chain is Large ribosomal subunit protein bL17 (140 aa).

Residues 119-133 (DPSAKGAADRARLEE) are compositionally biased toward basic and acidic residues. The segment at 119 to 140 (DPSAKGAADRARLEEEGGMTEE) is disordered.

Belongs to the bacterial ribosomal protein bL17 family. As to quaternary structure, part of the 50S ribosomal subunit. Contacts protein L32.

The chain is Large ribosomal subunit protein bL17 from Maricaulis maris (strain MCS10) (Caulobacter maris).